The sequence spans 356 residues: Thymidine kinase (356 aa).

Residues 1–29 are disordered; the sequence is MMDSRATYVPPKKISESNSNAEEDPTDCS. 61–68 contributes to the ATP binding site; that stretch reads GCVGVGKT. Glu86 acts as the Proton acceptor in catalysis. Gln122 contributes to the substrate binding site. Arg208 is an ATP binding site. Arg214 provides a ligand contact to substrate.

The protein belongs to the herpesviridae thymidine kinase family. Homodimer.

The enzyme catalyses thymidine + ATP = dTMP + ADP + H(+). Functionally, catalyzes the transfer of the gamma-phospho group of ATP to thymidine to generate dTMP in the salvage pathway of pyrimidine synthesis. The dTMP serves as a substrate for DNA polymerase during viral DNA replication. Allows the virus to be reactivated and to grow in non-proliferative cells lacking a high concentration of phosphorylated nucleic acid precursors. The polypeptide is Thymidine kinase (Elephas maximus (Indian elephant)).